Here is a 214-residue protein sequence, read N- to C-terminus: tRNA (guanine-N(7)-)-methyltransferase (214 aa).

Residues Glu44, Glu69, Asp96, and Asp118 each contribute to the S-adenosyl-L-methionine site. Asp118 is a catalytic residue. Substrate is bound by residues Lys122, Asp154, and 191 to 194 (TEYE).

The protein belongs to the class I-like SAM-binding methyltransferase superfamily. TrmB family.

It catalyses the reaction guanosine(46) in tRNA + S-adenosyl-L-methionine = N(7)-methylguanosine(46) in tRNA + S-adenosyl-L-homocysteine. Its pathway is tRNA modification; N(7)-methylguanine-tRNA biosynthesis. Functionally, catalyzes the formation of N(7)-methylguanine at position 46 (m7G46) in tRNA. The polypeptide is tRNA (guanine-N(7)-)-methyltransferase (Listeria welshimeri serovar 6b (strain ATCC 35897 / DSM 20650 / CCUG 15529 / CIP 8149 / NCTC 11857 / SLCC 5334 / V8)).